Here is a 1358-residue protein sequence, read N- to C-terminus: Phosphoinositide 3-kinase regulatory subunit 4 (1358 aa).

The N-myristoyl glycine moiety is linked to residue glycine 2. Positions 26–324 (FEYDKSLGST…AFPEVFYTFL (299 aa)) constitute a Protein kinase domain. ATP is bound by residues 32-40 (LGSTRFFKV) and lysine 53. Aspartate 148 serves as the catalytic Proton acceptor. HEAT repeat units lie at residues 413 to 450 (ILLDRITPYLLHFSNNSVPRVRAEALRTLTKVLALVQE), 458 to 495 (IYPEYILPGIAHLAQDDATIVRLAYAENIALLAETALR), 572 to 610 (KANDVLLSHMITFLNDKNDWHLRGAFFDSIVGVAAYVGW), and 612 to 648 (SSSILKPLLQQGLSDAEEFVIVKALNALTCMCQLGLL). Serine 808, serine 813, serine 853, and serine 865 each carry phosphoserine. The disordered stretch occupies residues 875-899 (LPKTSDHEVVPTGKSPRSESSAGVC). WD repeat units lie at residues 991–1030 (EHKSAVNRIRVSDEHLLFATCSNDGTVKIWNSQKMEGKTT), 1040–1079 (RIGGRVKTLTFCQGSHYLAIASDNGAVQLLGIEASKLPKS), 1093–1134 (KEDG…NAWT), 1139–1178 (LKSGLITSFAVDIHQCWLCIGTSSGAMACWDMRFQLPISS), 1182–1223 (PSRA…RRLT), and 1237–1278 (PSPH…RSYV). Positions 1307–1326 (KQKVGPSDDTPRRGPESLPV) are disordered. The span at 1315–1326 (DTPRRGPESLPV) shows a compositional bias: basic and acidic residues. Threonine 1316 bears the Phosphothreonine mark. The stretch at 1327–1358 (GHHDIITDIATFQTTQGFIVTASRDGIVKVWK) is one WD 7 repeat.

Belongs to the protein kinase superfamily. Ser/Thr protein kinase family. As to quaternary structure, component of the PI3K (PI3KC3/PI3K-III/class III phosphatidylinositol 3-kinase) complex the core of which is composed of the catalytic subunit PIK3C3, the regulatory subunit PIK3R4 and BECN1 associating with additional regulatory/auxiliary subunits to form alternative complex forms. Alternative complex forms containing a fourth regulatory subunit in a mutually exclusive manner are PI3K complex I (PI3KC3-C1) containing ATG14, and PI3K complex II (PI3KC3-C2) containing UVRAG. PI3KC3-C1 displays a V-shaped architecture with PIK3R4 serving as a bridge between PIK3C3 and the ATG14:BECN1 subcomplex. Both, PI3KC3-C1 and PI3KC3-C2, can associate with further regulatory subunits, such as RUBCN, SH3GLB1/Bif-1, AMBRA1 and NRBF2. PI3KC3-C1 probably associates with PIK3CB. Interacts with RAB7A in the presence of PIK3C3/VPS34. Interacts with NRBF2. Interacts with ARMC3. Mn(2+) serves as cofactor. Myristoylated. Post-translationally, probably autophosphorylated.

The protein resides in the late endosome. It localises to the cytoplasmic vesicle. It is found in the autophagosome. The protein localises to the membrane. The catalysed reaction is L-seryl-[protein] + ATP = O-phospho-L-seryl-[protein] + ADP + H(+). It catalyses the reaction L-threonyl-[protein] + ATP = O-phospho-L-threonyl-[protein] + ADP + H(+). Regulatory subunit of the PI3K complex that mediates formation of phosphatidylinositol 3-phosphate; different complex forms are believed to play a role in multiple membrane trafficking pathways: PI3KC3-C1 is involved in initiation of autophagosomes and PI3KC3-C2 in maturation of autophagosomes and endocytosis. Involved in regulation of degradative endocytic trafficking and cytokinesis, probably in the context of PI3KC3-C2. This Rattus norvegicus (Rat) protein is Phosphoinositide 3-kinase regulatory subunit 4 (Pik3r4).